A 351-amino-acid polypeptide reads, in one-letter code: D-alanine--D-alanine ligase (351 aa).

Residues 135–344 (KMAFAQAGLP…FAELVDQLIQ (210 aa)) form the ATP-grasp domain. Position 171–226 (171–226 (EQRLGYPCFVKPANLGSSVGIAKVRSRSELEKALDSAASYDRRIVIETGVKAREVE)) interacts with ATP. Asp297, Glu311, and Asn313 together coordinate Mg(2+).

It belongs to the D-alanine--D-alanine ligase family. Mg(2+) is required as a cofactor. Mn(2+) serves as cofactor.

The protein localises to the cytoplasm. It catalyses the reaction 2 D-alanine + ATP = D-alanyl-D-alanine + ADP + phosphate + H(+). Its pathway is cell wall biogenesis; peptidoglycan biosynthesis. Its function is as follows. Cell wall formation. In Rippkaea orientalis (strain PCC 8801 / RF-1) (Cyanothece sp. (strain PCC 8801)), this protein is D-alanine--D-alanine ligase.